We begin with the raw amino-acid sequence, 326 residues long: Nucleoporin Nup37 (326 aa).

WD repeat units follow at residues 6 to 54, 61 to 109, 115 to 154, 159 to 195, 199 to 237, 242 to 282, and 287 to 324; these read SRNA…FQEE, IQYK…LFTS, NEYK…IWNL, TAHF…FYDL, QAIL…IWDI, YPQN…QFQI, and HPQP…FWVT.

In terms of assembly, component of the Nup107-160 subcomplex of the nuclear pore complex (NPC). The Nup107-160 subcomplex includes NUP160, NUP133, NUP107, NUP98, NUP85, NUP43, NUP37, SEH1 and SEC13.

The protein localises to the chromosome. It is found in the centromere. It localises to the kinetochore. The protein resides in the nucleus. Its subcellular location is the nuclear pore complex. Its function is as follows. Component of the Nup107-160 subcomplex of the nuclear pore complex (NPC). The Nup107-160 subcomplex is required for the assembly of a functional NPC. The Nup107-160 subcomplex is also required for normal kinetochore microtubule attachment, mitotic progression and chromosome segregation. This chain is Nucleoporin Nup37 (NUP37), found in Homo sapiens (Human).